Reading from the N-terminus, the 222-residue chain is Transmembrane reductase CYB561D2 (222 aa).

Residues 2 to 17 (ALSAETESHIYRALRT) lie on the Cytoplasmic side of the membrane. Residues 14-217 (ALRTASGAAA…NQVSNAYLYR (204 aa)) enclose the Cytochrome b561 domain. The helical transmembrane segment at 18–38 (ASGAAAHLVALGFTIFVAVLA) threads the bilayer. Topologically, residues 39 to 46 (RPGSSLFS) are lumenal. Residues 47–67 (WHPVLMSLAFSFLMTEALLVF) traverse the membrane as a helical segment. H48 lines the heme b pocket. The Cytoplasmic segment spans residues 68–85 (SPESSLLHSLSRKGRARC). The heme b site is built by H86 and H120. Residues 86–106 (HWVLQLLALLCALLGLGLVIL) traverse the membrane as a helical segment. Residues 107-122 (HKEQLGKAHLVTRHGQ) are Lumenal-facing. Residues 123–143 (AGLLAVLWAGLQCSGGVGLLY) traverse the membrane as a helical segment. Topologically, residues 144–162 (PKLLPRWPLAKLKLYHATS) are cytoplasmic. Residue H159 participates in heme b binding. A helical membrane pass occupies residues 163–183 (GLVGYLLGSASLLLGMCSLWF). Over 184-186 (TAS) the chain is Lumenal. Residues 187 to 207 (VTGAAWYLAVLCPVLTSLVIM) form a helical membrane-spanning segment. Topologically, residues 208-222 (NQVSNAYLYRKRIQP) are cytoplasmic.

Heme b serves as cofactor.

The protein resides in the endoplasmic reticulum membrane. It is found in the cytoplasmic vesicle membrane. It carries out the reaction monodehydro-L-ascorbate radical(out) + L-ascorbate(in) = monodehydro-L-ascorbate radical(in) + L-ascorbate(out). The catalysed reaction is Fe(3+)(out) + L-ascorbate(in) = monodehydro-L-ascorbate radical(in) + Fe(2+)(out) + H(+). Transmembrane reductase that may use ascorbate as an electron donor in the cytoplasm and transfer electrons across endoplasmic reticulum membranes to reduce monodehydro-L-ascorbate radical and iron cations Fe(3+) in the lumen of that compartment. This Homo sapiens (Human) protein is Transmembrane reductase CYB561D2.